The following is a 268-amino-acid chain: 3-deoxy-manno-octulosonate cytidylyltransferase (268 aa).

The protein belongs to the KdsB family.

The protein localises to the cytoplasm. The enzyme catalyses 3-deoxy-alpha-D-manno-oct-2-ulosonate + CTP = CMP-3-deoxy-beta-D-manno-octulosonate + diphosphate. The protein operates within nucleotide-sugar biosynthesis; CMP-3-deoxy-D-manno-octulosonate biosynthesis; CMP-3-deoxy-D-manno-octulosonate from 3-deoxy-D-manno-octulosonate and CTP: step 1/1. It participates in bacterial outer membrane biogenesis; lipopolysaccharide biosynthesis. Activates KDO (a required 8-carbon sugar) for incorporation into bacterial lipopolysaccharide in Gram-negative bacteria. This is 3-deoxy-manno-octulosonate cytidylyltransferase from Psychrobacter cryohalolentis (strain ATCC BAA-1226 / DSM 17306 / VKM B-2378 / K5).